We begin with the raw amino-acid sequence, 509 residues long: MDYDLVMEDEFDALCLDVRRDHDSASKTKYPAKLHARKVVKELGVDDGLIYLPGQPDISLENSDQPRLFRQRRYFFYITGADFEDCAATYEVKHDKLTLWVPYVEPRQVLWFGSKPSAAECKRRYDVDEVRYTTQLSSFLRRFAAQPEPPVVYILHPDQAPDLGHGSQSQLRLDSSLLLPAMDRARVVKSDYEVAMVRRANDISSAAHRRVAERILRLTNEREIEAIIQAVCIANGSRSQAYPIIAGSGANGATLHYGANNAPLGGKQCVVIDAGCEWNCYASDITRTLPLSGSWTPKAAAIHAIVQRMQQECIAKVGPGTAWRDIHLHAASLGMEGLLGLGILKGRREDVARAGTVAAFFPHGLGHHVGLEVHDVSGTLALSAAEGHGTQLDFGKRAMVTPSMLADMTRSASSPDAAGVQERKTQLLLPNMIVTVEPGIYFCREYLEGYFRSDPAHADFIDWDLLEEYYDVGGVRIEDCILVTEDGYENLTVAPKGDELLDVINKGEK.

Mn(2+) is bound by residues aspartate 273, aspartate 284, glutamate 437, and glutamate 478.

This sequence belongs to the peptidase M24B family. Mn(2+) is required as a cofactor.

It catalyses the reaction Release of any N-terminal amino acid, including proline, that is linked to proline, even from a dipeptide or tripeptide.. Its function is as follows. Catalyzes the removal of a penultimate prolyl residue from the N-termini of peptides. This chain is Probable Xaa-Pro aminopeptidase MAC_04092, found in Metarhizium acridum (strain CQMa 102).